The sequence spans 378 residues: Erythronate-4-phosphate dehydrogenase (378 aa).

Residues Ser-45 and Thr-66 each coordinate substrate. Residues Asp-146 and Thr-175 each contribute to the NAD(+) site. The active site involves Arg-208. Asp-232 lines the NAD(+) pocket. Residue Glu-237 is part of the active site. The Proton donor role is filled by His-254. Gly-257 lines the NAD(+) pocket. Tyr-258 is a binding site for substrate.

The protein belongs to the D-isomer specific 2-hydroxyacid dehydrogenase family. PdxB subfamily. As to quaternary structure, homodimer.

It is found in the cytoplasm. It carries out the reaction 4-phospho-D-erythronate + NAD(+) = (R)-3-hydroxy-2-oxo-4-phosphooxybutanoate + NADH + H(+). The protein operates within cofactor biosynthesis; pyridoxine 5'-phosphate biosynthesis; pyridoxine 5'-phosphate from D-erythrose 4-phosphate: step 2/5. In terms of biological role, catalyzes the oxidation of erythronate-4-phosphate to 3-hydroxy-2-oxo-4-phosphonooxybutanoate. The chain is Erythronate-4-phosphate dehydrogenase from Shigella boydii serotype 4 (strain Sb227).